The chain runs to 803 residues: Zinc finger X-linked protein ZXDB (803 aa).

3 disordered regions span residues 1 to 91 (MEIP…GGDD), 120 to 140 (EAEE…AGPT), and 218 to 260 (AAHP…GPRG). The span at 13-26 (LQGGGGGGIPAGGG) shows a compositional bias: gly residues. 10 C2H2-type zinc fingers span residues 271 to 295 (YLCP…LLTH), 304 to 328 (FKCP…LQSH), 334 to 358 (FGCP…MKGH), 364 to 386 (FKCE…QRSH), 393 to 417 (YQCA…NRAH), 424 to 448 (FSCS…LRSH), 454 to 478 (FLCD…KRKH), 484 to 508 (FMCP…SITH), 514 to 538 (FVCP…SKKH), and 547 to 572 (SRCP…VKRH). Positions 271–577 (YLCPEAQCGQ…MVKRHKVGQD (307 aa)) are required for interaction with ZXDC. Residues 576–703 (QDLLAQLEAA…NMDEVSSVSV (128 aa)) are required for transcriptional activation.

The protein belongs to the ZXD family. In terms of assembly, self-associates. Interacts with ZXDC and CIITA. In terms of tissue distribution, may be expressed in brain, heart, kidney, liver, lung, muscle and placenta.

Its subcellular location is the nucleus. Functionally, cooperates with CIITA to promote transcription of MHC class I and MHC class II genes. The protein is Zinc finger X-linked protein ZXDB (ZXDB) of Homo sapiens (Human).